The following is a 283-amino-acid chain: 4-diphosphocytidyl-2-C-methyl-D-erythritol kinase (283 aa).

Lysine 12 is an active-site residue. An ATP-binding site is contributed by 94–104 (PAQAGLGGGSS). Residue aspartate 136 is part of the active site.

Belongs to the GHMP kinase family. IspE subfamily.

The enzyme catalyses 4-CDP-2-C-methyl-D-erythritol + ATP = 4-CDP-2-C-methyl-D-erythritol 2-phosphate + ADP + H(+). It participates in isoprenoid biosynthesis; isopentenyl diphosphate biosynthesis via DXP pathway; isopentenyl diphosphate from 1-deoxy-D-xylulose 5-phosphate: step 3/6. Functionally, catalyzes the phosphorylation of the position 2 hydroxy group of 4-diphosphocytidyl-2C-methyl-D-erythritol. The protein is 4-diphosphocytidyl-2-C-methyl-D-erythritol kinase of Acidovorax ebreus (strain TPSY) (Diaphorobacter sp. (strain TPSY)).